A 454-amino-acid polypeptide reads, in one-letter code: MELKGKKVLVAGLGVSGIALCKVLDSLKAKVIAYDEKEYDVLKENLEEIKSLSIDFRFGKFKKEFLEGVDLVVLSPGVPTDSDIVKTAQEKKIELLGEVEFAYRFSKAPIYAITGTNGKTTTTSLLGEMFKNTGRKVYVAGNIGYPLIYAVMEAAEGDFIVAEISSFQLETIKEFKPKISCIINITPDHLDRHKTFENYRDIKGRIFENQREDEYTVLNYDDPVTWSLKNKAKCRVFPFSRKSLLENGAYIKDGSIYISVNGNAEKIIDIEEIYIPGEHNLENALAASSVAYLSGISADVIANTLKTFKGVEHRIEFVDEINGVKFYNDSKGTNPDASIKAIQALKTPIVLIAGGYDKGSEFDEFVKAFNGKVKKLILIGQTAKKIRDTARKYSYPEDDILFAGTLEEAVKKAYESAKEGDSVLLSPACASWDMFRNFEERGRIFKKAVAELRR.

115–121 (GTNGKTT) is an ATP binding site.

Belongs to the MurCDEF family.

Its subcellular location is the cytoplasm. It catalyses the reaction UDP-N-acetyl-alpha-D-muramoyl-L-alanine + D-glutamate + ATP = UDP-N-acetyl-alpha-D-muramoyl-L-alanyl-D-glutamate + ADP + phosphate + H(+). Its pathway is cell wall biogenesis; peptidoglycan biosynthesis. Functionally, cell wall formation. Catalyzes the addition of glutamate to the nucleotide precursor UDP-N-acetylmuramoyl-L-alanine (UMA). The polypeptide is UDP-N-acetylmuramoylalanine--D-glutamate ligase (Thermoanaerobacter pseudethanolicus (strain ATCC 33223 / 39E) (Clostridium thermohydrosulfuricum)).